The chain runs to 563 residues: Merozoite receptor PK66 (563 aa).

Positions 1 to 13 (MNKIYYILFLSAQ) are cleaved as a signal peptide. Residues 14 to 487 (CLVHMGKCER…DGKHKKKMLL (474 aa)) lie on the Extracellular side of the membrane. 6 N-linked (GlcNAc...) asparagine glycosylation sites follow: Asn-36, Asn-107, Asn-176, Asn-189, Asn-238, and Asn-441. The chain crosses the membrane as a helical span at residues 488-508 (IIIGVTGAVCVVAVASLFYFR). Residues 509–563 (KKAQDDKYDKMDQAEAYGKTANTRKDEMLDPEASFWGEDKRASHTTPVLMEKPYY) are Cytoplasmic-facing.

The protein belongs to the apicomplexan parasites AMA1 family.

The protein resides in the membrane. Its function is as follows. Merozoite receptor PK66 is a surface antigen involved in parasite invasion of erythrocytes. This chain is Merozoite receptor PK66 (PK66), found in Plasmodium knowlesi (strain nuri).